A 522-amino-acid chain; its full sequence is F-box-like/WD repeat-containing protein TBL1Y (522 aa).

An N-acetylserine modification is found at S2. The region spanning 4–36 is the LisH domain; sequence TSDEVNFLVYRYLQESGFSHSAFTFGIESHISQ. The region spanning 41-86 is the F-box-like domain; sequence GTLVPPSALISILQKGLQYVEAEISINKDGTVFDSRPIESLSLIVA. Position 102 is an N6-acetyllysine (K102). Phosphoserine is present on S130. 8 WD repeats span residues 177–216, 233–272, 274–313, 316–354, 357–396, 399–447, 450–489, and 491–521; these read GHES…NGGS, PSNK…ASTL, QHKG…AKQQ, FHSA…PVKT, GHTN…CVHD, AHSK…CTHT, KHQE…LVHS, and QGTG…CVLD. K287 participates in a covalent cross-link: Glycyl lysine isopeptide (Lys-Gly) (interchain with G-Cter in SUMO2).

It belongs to the WD repeat EBI family. Probable component of the N-Cor repressor complex and some E3 ubiquitin ligase complex. Interacts with NCOR2. In terms of tissue distribution, fetal brain and prostate. Expressed in the cochlear spiral ganglion neurons, and in outer and inner hair cells.

It localises to the nucleus. Its function is as follows. F-box-like protein involved in the recruitment of the ubiquitin/19S proteasome complex to nuclear receptor-regulated transcription units. Plays an essential role in transcription activation mediated by nuclear receptors. Probably acts as integral component of corepressor complexes that mediates the recruitment of the 19S proteasome complex, leading to the subsequent proteasomal degradation of transcription repressor complexes, thereby allowing cofactor exchange. The chain is F-box-like/WD repeat-containing protein TBL1Y (TBL1Y) from Homo sapiens (Human).